Consider the following 1010-residue polypeptide: Retinoblastoma-related protein 1 (1010 aa).

The interval 1-23 (MEGAAPPASSGSEVTGAGSGKVD) is disordered. Residues 419–619 (TPVSTAMTTA…EKGSSMYNSL (201 aa)) are domain A. Residues 419-861 (TPVSTAMTTA…NEVFIPTVKP (443 aa)) are pocket. Residues 620-730 (IVARPTLSAE…PAAGGELCAE (111 aa)) form a spacer region. The disordered stretch occupies residues 657–679 (LPPLPFQKQEHSPDKDEVRSPKR). Basic and acidic residues predominate over residues 664–679 (KQEHSPDKDEVRSPKR). A domain B region spans residues 731 to 861 (TGIGVFLSKI…NEVFIPTVKP (131 aa)). Residues 868–898 (SGTSPNKKNEEKCAADGPYPESPRLSRFPNL) form a disordered region.

Belongs to the retinoblastoma protein (RB) family.

Its subcellular location is the nucleus. In terms of biological role, regulator of biological processes that recruits a histone deacetylase to control gene transcription. May play a role in the entry into mitosis, negatively regulating the cell proliferation. Formation of stable complexes with geminiviridae replication-associated proteins may create a cellular environment which favors viral DNA replication. The sequence is that of Retinoblastoma-related protein 1 (RBR1) from Oryza sativa subsp. indica (Rice).